A 253-amino-acid chain; its full sequence is uncharacterized protein (253 aa).

2 consecutive EamA domains span residues 1 to 97 (MFFM…IYSL) and 116 to 237 (FFWA…ISRL). Transmembrane regions (helical) follow at residues 2–22 (FFMA…AKQL), 28–48 (IFLL…GLLY), 53–73 (ESAV…TLIL), 80–100 (TEVI…LNLG), 101–121 (IYFS…WALF), 138–158 (AVQL…QFYF), 162–182 (INFL…SFYL), and 214–234 (GVNV…GILI).

Belongs to the EamA transporter family.

The protein localises to the cell membrane. This is an uncharacterized protein from Acidianus ambivalens (Desulfurolobus ambivalens).